The chain runs to 156 residues: RNA pyrophosphohydrolase (156 aa).

In terms of domain architecture, Nudix hydrolase spans 6 to 148 (NYRPNVAAIV…KKNIYVKVIK (143 aa)). The Nudix box signature appears at 43–64 (GGIDKGESVKNALFRELKEEIG).

It belongs to the Nudix hydrolase family. RppH subfamily. The cofactor is a divalent metal cation.

Its function is as follows. Accelerates the degradation of transcripts by removing pyrophosphate from the 5'-end of triphosphorylated RNA, leading to a more labile monophosphorylated state that can stimulate subsequent ribonuclease cleavage. This chain is RNA pyrophosphohydrolase, found in Campylobacter jejuni subsp. jejuni serotype O:6 (strain 81116 / NCTC 11828).